Reading from the N-terminus, the 125-residue chain is uncharacterized protein (125 aa).

Positions 45-110 (IVPVGSKTLL…IGNVPLKILC (66 aa)) constitute a Cupin type-2 domain.

This is an uncharacterized protein from Methanocaldococcus jannaschii (strain ATCC 43067 / DSM 2661 / JAL-1 / JCM 10045 / NBRC 100440) (Methanococcus jannaschii).